Here is a 251-residue protein sequence, read N- to C-terminus: Ditrans,polycis-undecaprenyl-diphosphate synthase ((2E,6E)-farnesyl-diphosphate specific) (251 aa).

Residue Asp20 is part of the active site. Asp20 serves as a coordination point for Mg(2+). Residues 21 to 24 (GNGR), Trp25, Arg33, His37, and 65 to 67 (SSE) each bind substrate. Asn68 functions as the Proton acceptor in the catalytic mechanism. Substrate contacts are provided by residues Trp69, Arg71, Arg188, and 194 to 196 (RIS). Glu207 provides a ligand contact to Mg(2+).

Belongs to the UPP synthase family. Homodimer. It depends on Mg(2+) as a cofactor.

It catalyses the reaction 8 isopentenyl diphosphate + (2E,6E)-farnesyl diphosphate = di-trans,octa-cis-undecaprenyl diphosphate + 8 diphosphate. In terms of biological role, catalyzes the sequential condensation of isopentenyl diphosphate (IPP) with (2E,6E)-farnesyl diphosphate (E,E-FPP) to yield (2Z,6Z,10Z,14Z,18Z,22Z,26Z,30Z,34E,38E)-undecaprenyl diphosphate (di-trans,octa-cis-UPP). UPP is the precursor of glycosyl carrier lipid in the biosynthesis of bacterial cell wall polysaccharide components such as peptidoglycan and lipopolysaccharide. The protein is Ditrans,polycis-undecaprenyl-diphosphate synthase ((2E,6E)-farnesyl-diphosphate specific) of Vibrio vulnificus (strain CMCP6).